The chain runs to 133 residues: Probable 4-amino-4-deoxy-L-arabinose-phosphoundecaprenol flippase subunit ArnF (133 aa).

At 1 to 5 (MKTGY) the chain is on the cytoplasmic side. Residues 6–26 (LWAIASALLVTVAQLLLKIGM) form a helical membrane-spanning segment. The Periplasmic segment spans residues 27-47 (SELPDLQLEKQWFDLHWLWAN). A helical transmembrane segment spans residues 48–68 (IIPISVVFVGLIGYVLSMVCW). Residues 51-125 (ISVVFVGLIG…IMLGVWLISQ (75 aa)) form the EamA domain. The Cytoplasmic portion of the chain corresponds to 69-80 (LLTLRTIPLNKA). The helical transmembrane segment at 81 to 101 (YPLISLSYVFVYILAVVLPWF) threads the bilayer. Topologically, residues 102 to 103 (QE) are periplasmic. The helical transmembrane segment at 104–124 (TLSWSKTIGIIFIMLGVWLIS) threads the bilayer. Residues 125–133 (QKTEQTTSH) are Cytoplasmic-facing.

Belongs to the ArnF family. As to quaternary structure, heterodimer of ArnE and ArnF.

It localises to the cell inner membrane. It functions in the pathway bacterial outer membrane biogenesis; lipopolysaccharide biosynthesis. Translocates 4-amino-4-deoxy-L-arabinose-phosphoundecaprenol (alpha-L-Ara4N-phosphoundecaprenol) from the cytoplasmic to the periplasmic side of the inner membrane. This Proteus mirabilis (strain HI4320) protein is Probable 4-amino-4-deoxy-L-arabinose-phosphoundecaprenol flippase subunit ArnF.